The sequence spans 282 residues: Elongation factor Ts (282 aa).

Residues 80–83 are involved in Mg(2+) ion dislocation from EF-Tu; the sequence is TDFV.

This sequence belongs to the EF-Ts family.

Its subcellular location is the cytoplasm. Functionally, associates with the EF-Tu.GDP complex and induces the exchange of GDP to GTP. It remains bound to the aminoacyl-tRNA.EF-Tu.GTP complex up to the GTP hydrolysis stage on the ribosome. The polypeptide is Elongation factor Ts (Chlamydia trachomatis serovar A (strain ATCC VR-571B / DSM 19440 / HAR-13)).